Consider the following 408-residue polypeptide: Histidine--tRNA ligase (408 aa).

The protein belongs to the class-II aminoacyl-tRNA synthetase family. As to quaternary structure, homodimer.

It localises to the cytoplasm. The catalysed reaction is tRNA(His) + L-histidine + ATP = L-histidyl-tRNA(His) + AMP + diphosphate + H(+). The sequence is that of Histidine--tRNA ligase from Campylobacter lari (strain RM2100 / D67 / ATCC BAA-1060).